The sequence spans 254 residues: Phosphoglycerate mutase 1 (254 aa).

Substrate is bound by residues 10–17 and 23–24; these read RHGESTWN and SG. Residue His11 is the Tele-phosphohistidine intermediate of the active site. Phosphoserine is present on residues Ser14 and Ser23. Residue Tyr26 is modified to Phosphotyrosine. Residue Ser31 is modified to Phosphoserine. Substrate is bound by residues Arg62, 89-92, and Lys100; that span reads ERHY. The active-site Proton donor/acceptor is Glu89. Lys106 is modified (N6-acetyllysine). 116–117 contacts substrate; it reads RR. Position 118 is a phosphoserine (Ser118). 187–188 contacts substrate; that stretch reads GN. Residue Lys251 is modified to N6-acetyllysine; alternate. Lys251 is modified (N6-succinyllysine; alternate). 2 positions are modified to N6-acetyllysine: Lys253 and Lys254.

This sequence belongs to the phosphoglycerate mutase family. BPG-dependent PGAM subfamily. As to quaternary structure, homodimer. Post-translationally, acetylated at Lys-253, Lys-253 and Lys-254 under high glucose condition. Acetylation increases catalytic activity. Under glucose restriction SIRT1 levels dramatically increase and it deacetylates the enzyme.

It carries out the reaction (2R)-2-phosphoglycerate = (2R)-3-phosphoglycerate. The catalysed reaction is (2R)-3-phospho-glyceroyl phosphate = (2R)-2,3-bisphosphoglycerate + H(+). Functionally, catalyzes the interconversion of 2-phosphoglycerate and 3-phosphoglyceratea crucial step in glycolysis, by using 2,3-bisphosphoglycerate. Also catalyzes the interconversion of (2R)-2,3-bisphosphoglycerate and (2R)-3-phospho-glyceroyl phosphate. The chain is Phosphoglycerate mutase 1 from Bos taurus (Bovine).